Reading from the N-terminus, the 524-residue chain is 2,3-bisphosphoglycerate-independent phosphoglycerate mutase (524 aa).

2 residues coordinate Mn(2+): D13 and S63. The active-site Phosphoserine intermediate is the S63. Substrate is bound by residues H124, 154–155, R186, R192, 262–265, and K337; these read RD and RADR. Mn(2+) is bound by residues D404, H408, D445, H446, and H464.

Belongs to the BPG-independent phosphoglycerate mutase family. Monomer. Requires Mn(2+) as cofactor.

It catalyses the reaction (2R)-2-phosphoglycerate = (2R)-3-phosphoglycerate. It functions in the pathway carbohydrate degradation; glycolysis; pyruvate from D-glyceraldehyde 3-phosphate: step 3/5. In terms of biological role, catalyzes the interconversion of 2-phosphoglycerate and 3-phosphoglycerate. The chain is 2,3-bisphosphoglycerate-independent phosphoglycerate mutase from Thermomicrobium roseum (strain ATCC 27502 / DSM 5159 / P-2).